A 121-amino-acid chain; its full sequence is Prefoldin subunit beta (121 aa).

Belongs to the prefoldin subunit beta family. In terms of assembly, heterohexamer of two alpha and four beta subunits.

It is found in the cytoplasm. Functionally, molecular chaperone capable of stabilizing a range of proteins. Seems to fulfill an ATP-independent, HSP70-like function in archaeal de novo protein folding. This chain is Prefoldin subunit beta (pfdB), found in Methanothermobacter thermautotrophicus (strain ATCC 29096 / DSM 1053 / JCM 10044 / NBRC 100330 / Delta H) (Methanobacterium thermoautotrophicum).